The following is a 144-amino-acid chain: Large ribosomal subunit protein uL15 (144 aa).

The interval 1-56 (MELNNLKPAAGAKHAKRRVGRGIGSGLGKTAGRGHKGQKSRSGGFHKVGFEGGQMP) is disordered. The segment covering 21–31 (RGIGSGLGKTA) has biased composition (gly residues).

It belongs to the universal ribosomal protein uL15 family. Part of the 50S ribosomal subunit.

Its function is as follows. Binds to the 23S rRNA. The polypeptide is Large ribosomal subunit protein uL15 (Burkholderia cenocepacia (strain HI2424)).